Consider the following 266-residue polypeptide: Putative transmembrane ascorbate-dependent reductase CYB561 homolog (266 aa).

Residues 1–22 (MSLLFDPGFVILREDQSVKLFN) are Cytoplasmic-facing. The helical transmembrane segment at 23–43 (IILVMSQVFGGLAVLLVTIWM) threads the bilayer. Residues 27 to 240 (MSQVFGGLAV…YTVCVLLLVL (214 aa)) form the Cytochrome b561 domain. Residues 44-61 (SKFESGFAWNEDPDKEFN) are Vesicular-facing. The helical transmembrane segment at 62–82 (YHPTFMIMGMVFLFGEALLVY) threads the bilayer. 3 residues coordinate heme b: His63, Arg83, and Lys90. The Cytoplasmic segment spans residues 83-95 (RVFRNERKKFSKT). Residues Lys90 and Lys94 each coordinate L-ascorbate. Residues 96–116 (LHVILHSCVLVFMLMALKAVF) traverse the membrane as a helical segment. Residues His97, 134–137 (NLVS), and His139 each bind heme b. Over 117-141 (DYHNLHKDPSGNPAPIVNLVSLHSW) the chain is Vesicular. Residues 142–162 (IGLSVVILYFAQYIVGFITYF) traverse the membrane as a helical segment. Residues 163–176 (FPGMPIPIRQLVMP) lie on the Cytoplasmic side of the membrane. Arg171 provides a ligand contact to L-ascorbate. Residues 177 to 197 (FHQMFGVLIFIFVSITVAMGI) traverse the membrane as a helical segment. 2 residues coordinate heme b: His178 and Glu199. Topologically, residues 198-219 (SERAAWKHTCWTKEGQMCAQQA) are vesicular. The chain crosses the membrane as a helical span at residues 220–240 (TSSFVGVFTFLYTVCVLLLVL). At 241–266 (NPRWKRQSLPEEEGLHHLTSSHSMSD) the chain is on the cytoplasmic side. Lys245 contributes to the heme b binding site.

Heme b serves as cofactor.

It localises to the membrane. The catalysed reaction is monodehydro-L-ascorbate radical(out) + L-ascorbate(in) = monodehydro-L-ascorbate radical(in) + L-ascorbate(out). Its function is as follows. Putative transmembrane reductase that uses ascorbate as an electron donor in the cytoplasm and transfers electrons across membranes to reduce monodehydro-L-ascorbate radical in the lumen of secretory vesicles. This Caenorhabditis elegans protein is Putative transmembrane ascorbate-dependent reductase CYB561 homolog.